The following is a 559-amino-acid chain: Endoglin (559 aa).

Positions 1-20 are cleaved as a signal peptide; it reads MKSICCVLVLCLLLCRRSTA. At 21 to 473 the chain is on the extracellular side; it reads SESICELKDV…SCFEFGLSAV (453 aa). Intrachain disulfides connect Cys25-Cys201 and Cys47-Cys174. Asn55, Asn79, Asn109, Asn133, Asn170, Asn302, and Asn352 each carry an N-linked (GlcNAc...) asparagine glycan. An intrachain disulfide couples Cys381 to Cys427. A helical transmembrane segment spans residues 474 to 494; sequence LGIAFGGFLIGVLLTGALWFI. At 495–559 the chain is on the cytoplasmic side; the sequence is KIRTGHPVAL…TQSTPTSSMA (65 aa). The interval 528–559 is disordered; it reads RQPVPTHPSPSENSSANASIGSTQSTPTSSMA. Residues 536–546 are compositionally biased toward low complexity; that stretch reads SPSENSSANAS. Residues 547 to 559 are compositionally biased toward polar residues; that stretch reads IGSTQSTPTSSMA.

In terms of assembly, homodimer; disulfide-linked.

It is found in the cell membrane. Functionally, vascular endothelium glycoprotein that plays an important role in the regulation of angiogenesis. Required for normal structure and integrity of adult vasculature. Important for endothelial cell shape changes in response to blood flow, which drive vascular remodeling and establishment of normal vascular morphology during angiogenesis. The sequence is that of Endoglin from Danio rerio (Zebrafish).